The following is a 442-amino-acid chain: Protein PRRC1-B (442 aa).

The disordered stretch occupies residues 1–24; it reads MMEESGIETTPPSTPPPSTIGTSV.

This sequence belongs to the PRRC1 family.

It localises to the golgi apparatus. This is Protein PRRC1-B (prrc1-b) from Xenopus laevis (African clawed frog).